The sequence spans 318 residues: Probable 3-hydroxyisobutyrate dehydrogenase-like 3, mitochondrial (318 aa).

Residues 35-64 (TRIG…TVYA) and serine 129 contribute to the NAD(+) site. Lysine 203 is an active-site residue. Lysine 271 is an NAD(+) binding site.

This sequence belongs to the HIBADH-related family. 3-hydroxyisobutyrate dehydrogenase subfamily.

The protein localises to the mitochondrion. The catalysed reaction is 3-hydroxy-2-methylpropanoate + NAD(+) = 2-methyl-3-oxopropanoate + NADH + H(+). It participates in amino-acid degradation; L-valine degradation. This is Probable 3-hydroxyisobutyrate dehydrogenase-like 3, mitochondrial from Arabidopsis thaliana (Mouse-ear cress).